The following is a 391-amino-acid chain: S-adenosylmethionine synthase (391 aa).

An ATP-binding site is contributed by His14. Asp16 contributes to the Mg(2+) binding site. Glu42 provides a ligand contact to K(+). L-methionine is bound by residues Glu55 and Gln98. Residues 98–108 form a flexible loop region; that stretch reads QSVDIAMGVDE. ATP-binding positions include 172–174, 238–239, Asp247, 253–254, Ala270, and Lys274; these read DGK, RF, and RK. Asp247 contributes to the L-methionine binding site. Lys278 serves as a coordination point for L-methionine.

The protein belongs to the AdoMet synthase family. Homotetramer; dimer of dimers. Mg(2+) serves as cofactor. K(+) is required as a cofactor.

The protein localises to the cytoplasm. The catalysed reaction is L-methionine + ATP + H2O = S-adenosyl-L-methionine + phosphate + diphosphate. It functions in the pathway amino-acid biosynthesis; S-adenosyl-L-methionine biosynthesis; S-adenosyl-L-methionine from L-methionine: step 1/1. In terms of biological role, catalyzes the formation of S-adenosylmethionine (AdoMet) from methionine and ATP. The overall synthetic reaction is composed of two sequential steps, AdoMet formation and the subsequent tripolyphosphate hydrolysis which occurs prior to release of AdoMet from the enzyme. This Clostridium botulinum (strain Langeland / NCTC 10281 / Type F) protein is S-adenosylmethionine synthase.